The chain runs to 139 residues: D-ribose pyranase (139 aa).

His20 (proton donor) is an active-site residue. Substrate-binding positions include Asp28, His106, and 128–130 (YAN).

The protein belongs to the RbsD / FucU family. RbsD subfamily. In terms of assembly, homodecamer.

Its subcellular location is the cytoplasm. It catalyses the reaction beta-D-ribopyranose = beta-D-ribofuranose. It participates in carbohydrate metabolism; D-ribose degradation; D-ribose 5-phosphate from beta-D-ribopyranose: step 1/2. In terms of biological role, catalyzes the interconversion of beta-pyran and beta-furan forms of D-ribose. The chain is D-ribose pyranase from Salmonella typhi.